Reading from the N-terminus, the 483-residue chain is PAT complex subunit CCDC47 (483 aa).

The N-terminal stretch at Met1–Ala20 is a signal peptide. Residues Lys21–Ser135 are Cytoplasmic-facing. A disordered region spans residues Met46–Asp118. Residues Thr60 to Gly104 show a composition bias toward acidic residues. The span at Tyr105 to Asp118 shows a compositional bias: basic and acidic residues. The helical transmembrane segment at Tyr136 to Ile155 threads the bilayer. Topologically, residues Gly156–Met483 are lumenal. Asn178 carries an N-linked (GlcNAc...) asparagine glycan. The disordered stretch occupies residues Gln424–Met483. The span at Gln430–Gln472 shows a compositional bias: basic and acidic residues. Positions Glu451 to Lys481 form a coiled coil. Residues Met473 to Met483 are compositionally biased toward basic residues.

Belongs to the CCDC47 family. As to quaternary structure, component of the PAT complex, composed of WDR83OS/Asterix and CCDC47. The PAT complex is part of the multi-pass translocon (MPT) complex, composed of three subcomplexes, the GEL complex (composed of RAB5IF/OPTI and TMCO1), the BOS complex (composed of NCLN/Nicalin, NOMO1 and TMEM147) and the PAT complex (composed of WDR83OS/Asterix and CCDC47). The MPT complex associates with the SEC61 complex. Interacts with VCP, HSPA5, DERL1, DERL2 and SELENOS.

The protein localises to the endoplasmic reticulum membrane. The protein resides in the rough endoplasmic reticulum membrane. In terms of biological role, component of the multi-pass translocon (MPT) complex that mediates insertion of multi-pass membrane proteins into the lipid bilayer of membranes. The MPT complex takes over after the SEC61 complex: following membrane insertion of the first few transmembrane segments of proteins by the SEC61 complex, the MPT complex occludes the lateral gate of the SEC61 complex to promote insertion of subsequent transmembrane regions. Within the MPT complex, the PAT subcomplex sequesters any highly polar regions in the transmembrane domains away from the non-polar membrane environment until they can be buried in the interior of the fully assembled protein. Within the PAT subcomplex, CCDC47 occludes the lateral gate of the SEC61 complex. Involved in the regulation of calcium ion homeostasis in the ER. Required for proper protein degradation via the ERAD (ER-associated degradation) pathway. Has an essential role in the maintenance of ER organization during embryogenesis. The protein is PAT complex subunit CCDC47 (CCDC47) of Pongo abelii (Sumatran orangutan).